Here is a 201-residue protein sequence, read N- to C-terminus: Dimethylsulfoniopropionate lyase DddQ (201 aa).

Positions 130, 134, 136, and 169 each coordinate a divalent metal cation.

Belongs to the non-heme iron-dependent dioxygenase family. Homodimer. The cofactor is a divalent metal cation.

The enzyme catalyses S,S-dimethyl-beta-propiothetin = acrylate + dimethyl sulfide + H(+). Functionally, may act as a dimethylsulfoniopropionate (DMSP) in vitro, releasing dimethyl sulfide (DMS). DMS is the principal form by which sulfur is transported from oceans to the atmosphere. The real activity of the protein is however subject to debate and it is unclear whether it constitutes a real dimethylsulfoniopropionate lyase in vivo. This Ruegeria pomeroyi (strain ATCC 700808 / DSM 15171 / DSS-3) (Silicibacter pomeroyi) protein is Dimethylsulfoniopropionate lyase DddQ.